A 248-amino-acid chain; its full sequence is 2,3-bisphosphoglycerate-dependent phosphoglycerate mutase (248 aa).

Substrate is bound by residues Arg-10 to Asn-17, Thr-23 to Gly-24, Arg-62, Glu-89 to Tyr-92, Lys-100, Arg-116 to Arg-117, and Gly-183 to Asn-184. Residue His-11 is the Tele-phosphohistidine intermediate of the active site. Glu-89 functions as the Proton donor/acceptor in the catalytic mechanism.

Belongs to the phosphoglycerate mutase family. BPG-dependent PGAM subfamily.

It catalyses the reaction (2R)-2-phosphoglycerate = (2R)-3-phosphoglycerate. It participates in carbohydrate degradation; glycolysis; pyruvate from D-glyceraldehyde 3-phosphate: step 3/5. Functionally, catalyzes the interconversion of 2-phosphoglycerate and 3-phosphoglycerate. This chain is 2,3-bisphosphoglycerate-dependent phosphoglycerate mutase, found in Corynebacterium diphtheriae (strain ATCC 700971 / NCTC 13129 / Biotype gravis).